We begin with the raw amino-acid sequence, 770 residues long: Proprotein convertase subtilisin/kexin type 7 (770 aa).

The signal sequence occupies residues 1 to 36 (MPKGRQKVPHLDAHLGLPICLWLELAIFFLVPQVMG). The propeptide occupies 37–140 (LSEAGGLDIL…EQTLLKRAKR (104 aa)). Residues 141-666 (SIHFNDPKYP…YTITPNTLKT (526 aa)) are Extracellular-facing. The 321-residue stretch at 152–472 (QWHLNNRRSP…FGLLNAWRLV (321 aa)) folds into the Peptidase S8 domain. Residues Asn166 and Asn174 are each glycosylated (N-linked (GlcNAc...) asparagine). The active-site Charge relay system is the Asp186. The segment at 195-228 (DIAPNYSPEGSYDLNSNDPDPMPHPDEENGNHHG) is disordered. Residues 215-225 (PMPHPDEENGN) are compositionally biased toward basic and acidic residues. Catalysis depends on His227, which acts as the Charge relay system. Asn240 carries an N-linked (GlcNAc...) asparagine glycan. The Charge relay system role is filled by Ser405. One can recognise a P/Homo B domain in the interval 480-617 (SVPYLASYVS…QLTLYGSMWS (138 aa)). An N-linked (GlcNAc...) asparagine glycan is attached at Asn510. Residues 667 to 687 (LVLVGCFSVFWTIYYMLEVCL) traverse the membrane as a helical segment. At 688-770 (SQRNKASTHG…LLQGKSGQIC (83 aa)) the chain is on the cytoplasmic side.

The protein belongs to the peptidase S8 family. Ca(2+) serves as cofactor. In terms of tissue distribution, widely expressed. Expressed in brain, lung, muscle, heart, liver, kidney, spleen and thymus.

The protein localises to the golgi apparatus. It is found in the trans-Golgi network membrane. With respect to regulation, inhibited by zinc and copper. In terms of biological role, serine endoprotease that processes various proproteins by cleavage at paired basic amino acids, recognizing the RXXX[KR]R consensus motif. Likely functions in the constitutive secretory pathway. The protein is Proprotein convertase subtilisin/kexin type 7 (Pcsk7) of Mus musculus (Mouse).